Here is a 608-residue protein sequence, read N- to C-terminus: UvrABC system protein C (608 aa).

Positions 15–93 (HQPGVYRMYN…IKQYLPKYNV (79 aa)) constitute a GIY-YIG domain. The 36-residue stretch at 203-238 (RQVIQSLVEQMEGASQALNFEKAATIRDQIQSMRRV) folds into the UVR domain.

It belongs to the UvrC family. Interacts with UvrB in an incision complex.

It localises to the cytoplasm. Its function is as follows. The UvrABC repair system catalyzes the recognition and processing of DNA lesions. UvrC both incises the 5' and 3' sides of the lesion. The N-terminal half is responsible for the 3' incision and the C-terminal half is responsible for the 5' incision. The protein is UvrABC system protein C of Aliivibrio salmonicida (strain LFI1238) (Vibrio salmonicida (strain LFI1238)).